A 273-amino-acid polypeptide reads, in one-letter code: Ribosomal RNA small subunit methyltransferase A (273 aa).

Residues Asn18, Leu20, Gly45, Glu66, Asp91, and Asn113 each contribute to the S-adenosyl-L-methionine site.

It belongs to the class I-like SAM-binding methyltransferase superfamily. rRNA adenine N(6)-methyltransferase family. RsmA subfamily.

The protein localises to the cytoplasm. It carries out the reaction adenosine(1518)/adenosine(1519) in 16S rRNA + 4 S-adenosyl-L-methionine = N(6)-dimethyladenosine(1518)/N(6)-dimethyladenosine(1519) in 16S rRNA + 4 S-adenosyl-L-homocysteine + 4 H(+). Specifically dimethylates two adjacent adenosines (A1518 and A1519) in the loop of a conserved hairpin near the 3'-end of 16S rRNA in the 30S particle. May play a critical role in biogenesis of 30S subunits. The polypeptide is Ribosomal RNA small subunit methyltransferase A (Shigella boydii serotype 4 (strain Sb227)).